The sequence spans 494 residues: Glutamyl-tRNA reductase (494 aa).

Substrate-binding positions include 58–61, S118, 123–125, and Q129; these read TCNR and EQQ. C59 serves as the catalytic Nucleophile. 205–210 provides a ligand contact to NADP(+); the sequence is GAGAMA. The interval 448 to 494 is disordered; the sequence is KGANAGSGQRKKQKPQENRVSTARAVYRSTYQDLTQASTPGGKDDDQ. The span at 476 to 486 shows a compositional bias: polar residues; it reads STYQDLTQAST.

This sequence belongs to the glutamyl-tRNA reductase family. Homodimer.

It carries out the reaction (S)-4-amino-5-oxopentanoate + tRNA(Glu) + NADP(+) = L-glutamyl-tRNA(Glu) + NADPH + H(+). Its pathway is porphyrin-containing compound metabolism; protoporphyrin-IX biosynthesis; 5-aminolevulinate from L-glutamyl-tRNA(Glu): step 1/2. In terms of biological role, catalyzes the NADPH-dependent reduction of glutamyl-tRNA(Glu) to glutamate 1-semialdehyde (GSA). The polypeptide is Glutamyl-tRNA reductase (Corynebacterium urealyticum (strain ATCC 43042 / DSM 7109)).